Reading from the N-terminus, the 179-residue chain is Large ribosomal subunit protein uL5c (179 aa).

The protein belongs to the universal ribosomal protein uL5 family. Part of the 50S ribosomal subunit; contacts the 5S rRNA.

The protein localises to the plastid. Its function is as follows. Binds 5S rRNA, forms part of the central protuberance of the 50S subunit. In Euglena longa (Euglenophycean alga), this protein is Large ribosomal subunit protein uL5c (rpl5).